We begin with the raw amino-acid sequence, 80 residues long: UPF0248 protein M1425_2629 (80 aa).

Belongs to the UPF0248 family.

In Saccharolobus islandicus (strain M.14.25 / Kamchatka #1) (Sulfolobus islandicus), this protein is UPF0248 protein M1425_2629.